The primary structure comprises 396 residues: Ribosomal RNA large subunit methyltransferase I (396 aa).

The region spanning 2–81 (TVRLILAKGR…EVIDCAFFIR (80 aa)) is the PUA domain.

Belongs to the methyltransferase superfamily. RlmI family.

The protein resides in the cytoplasm. It catalyses the reaction cytidine(1962) in 23S rRNA + S-adenosyl-L-methionine = 5-methylcytidine(1962) in 23S rRNA + S-adenosyl-L-homocysteine + H(+). In terms of biological role, specifically methylates the cytosine at position 1962 (m5C1962) of 23S rRNA. The protein is Ribosomal RNA large subunit methyltransferase I of Yersinia pseudotuberculosis serotype O:1b (strain IP 31758).